We begin with the raw amino-acid sequence, 246 residues long: ATP synthase subunit a, chloroplastic (246 aa).

Transmembrane regions (helical) follow at residues 35–55, 94–114, 132–152, 198–218, and 219–239; these read AQVL…TFLA, IPFI…GALI, DINT…YAGL, LVVA…MMFL, and GLFT…AYIG.

Belongs to the ATPase A chain family. F-type ATPases have 2 components, CF(1) - the catalytic core - and CF(0) - the membrane proton channel. CF(1) has five subunits: alpha(3), beta(3), gamma(1), delta(1), epsilon(1). CF(0) has four main subunits: a, b, b' and c.

Its subcellular location is the plastid. The protein resides in the chloroplast thylakoid membrane. Functionally, key component of the proton channel; it plays a direct role in the translocation of protons across the membrane. The sequence is that of ATP synthase subunit a, chloroplastic from Chara vulgaris (Common stonewort).